A 678-amino-acid chain; its full sequence is Putative pentatricopeptide repeat-containing protein At3g18840 (678 aa).

16 PPR repeats span residues 22–56, 57–84, 85–116, 124–158, 159–190, 192–222, 224–258, 259–293, 294–324, 325–359, 360–390, 392–426, 427–457, 458–492, 493–528, and 529–563; these read TAVSSNQLVNLYSKSGLLREARNVFDEMLERNVYS, WNAVIAAYVKFNNVKEARELFESDNCER, DLITYNTLLSGFAKTDGCESEAIEMFGEMHRK, DDFTVTTMVKLSAKLTNVFYGEQLHGVLVKTGNDG, TKFAVSSLIHMYSKCGKFKEVCNIFNGSCVEF, DSVARNAMIAAYCREGDIDKALSVFWRNPEL, DTISWNTLIAGYAQNGYEEEALKMAVSMEENGLKW, DEHSFGAVLNVLSSLKSLKIGKEVHARVLKNGSYS, NKFVSSGIVDVYCKCGNMKYAESAHLLYGFG, NLYSASSMIVGYSSQGKMVEAKRLFDSLSEKNLVV, WTAMFLGYLNLRQPDSVLELARAFIANETNT, DSLVMVSVLGACSLQAYMEPGKEIHGHSLRTGILM, DKKLVTAFVDMYSKCGNVEYAERIFDSSFER, DTVMYNAMIAGCAHHGHEAKSFQHFEDMTEGGFKP, DEITFMALLSACRHRGLVLEGEKYFKSMIEAYNISP, and ETGHYTCMIDLYGKAYRLDKAIELMEGIDQVEKDA. The segment at 565-640 is type E motif; sequence ILGAFLNACS…FSGCSWANID (76 aa). Residues 641 to 671 are type E(+) motif; it reads KQFHMFTSSDISHYETEAIYAMLHFVTKDLS.

The protein belongs to the PPR family. PCMP-E subfamily.

This Arabidopsis thaliana (Mouse-ear cress) protein is Putative pentatricopeptide repeat-containing protein At3g18840 (PCMP-E92).